A 381-amino-acid polypeptide reads, in one-letter code: Complement decay-accelerating factor (381 aa).

The N-terminal stretch at Met1–Gly34 is a signal peptide. 4 Sushi domains span residues Asp35–Arg96, Arg96–Lys160, Lys161–Glu222, and Ile223–Gly285. 2 disulfides stabilise this stretch: Cys36–Cys81 and Cys65–Cys94. Asn95 is a glycosylation site (N-linked (GlcNAc...) asparagine). Intrachain disulfides connect Cys98/Cys145, Cys129/Cys158, Cys163/Cys204, Cys190/Cys220, Cys225/Cys267, and Cys253/Cys283. The interval Ser277–Gly354 is disordered. Polar residues predominate over residues Ser287–Val309. The segment covering Ser310–Thr328 has biased composition (low complexity). A lipid anchor (GPI-anchor amidated serine) is attached at Ser353. A propeptide spans Gly354–Thr381 (removed in mature form).

The protein belongs to the receptors of complement activation (RCA) family. In terms of assembly, monomer (major form) and non-disulfide-linked, covalent homodimer (minor form). Interacts with ADGRE5. (Microbial infection) Interacts with coxsackievirus A21, coxsackieviruses B1, B3 and B5 capsid proteins. As to quaternary structure, (Microbial infection) Interacts with human enterovirus 70 and D68 capsid proteins. In terms of assembly, (Microbial infection) Interacts with human echoviruses 6, 7, 11, 12, 20 and 21 capsid proteins. In terms of processing, the Ser/Thr-rich domain is heavily O-glycosylated. In terms of tissue distribution, expressed on the plasma membranes of all cell types that are in intimate contact with plasma complement proteins. It is also found on the surfaces of epithelial cells lining extracellular compartments, and variants of the molecule are present in body fluids and in extracellular matrix.

Its subcellular location is the cell membrane. It localises to the secreted. Functionally, this protein recognizes C4b and C3b fragments that condense with cell-surface hydroxyl or amino groups when nascent C4b and C3b are locally generated during C4 and c3 activation. Interaction of daf with cell-associated C4b and C3b polypeptides interferes with their ability to catalyze the conversion of C2 and factor B to enzymatically active C2a and Bb and thereby prevents the formation of C4b2a and C3bBb, the amplification convertases of the complement cascade. Inhibits complement activation by destabilizing and preventing the formation of C3 and C5 convertases, which prevents complement damage. (Microbial infection) Acts as a receptor for Coxsackievirus A21, coxsackieviruses B1, B3 and B5. In terms of biological role, (Microbial infection) Acts as a receptor for Human enterovirus 70 and D68. Its function is as follows. (Microbial infection) Acts as a receptor for Human echoviruses 6, 7, 11, 12, 20 and 21. This chain is Complement decay-accelerating factor (CD55), found in Homo sapiens (Human).